We begin with the raw amino-acid sequence, 140 residues long: Nucleoside diphosphate kinase (140 aa).

ATP contacts are provided by K11, F59, R87, T93, R104, and N114. Residue H117 is the Pros-phosphohistidine intermediate of the active site.

This sequence belongs to the NDK family. In terms of assembly, homotetramer. Mg(2+) is required as a cofactor.

The protein resides in the cytoplasm. It catalyses the reaction a 2'-deoxyribonucleoside 5'-diphosphate + ATP = a 2'-deoxyribonucleoside 5'-triphosphate + ADP. The enzyme catalyses a ribonucleoside 5'-diphosphate + ATP = a ribonucleoside 5'-triphosphate + ADP. Major role in the synthesis of nucleoside triphosphates other than ATP. The ATP gamma phosphate is transferred to the NDP beta phosphate via a ping-pong mechanism, using a phosphorylated active-site intermediate. This Rickettsia bellii (strain OSU 85-389) protein is Nucleoside diphosphate kinase.